A 422-amino-acid chain; its full sequence is Tyrosine--tRNA ligase (422 aa).

Residue Tyr-37 participates in L-tyrosine binding. The short motif at 42–51 (PTEESLHIGH) is the 'HIGH' region element. Residues Tyr-175 and Gln-179 each coordinate L-tyrosine. Positions 235–239 (KFGKT) match the 'KMSKS' region motif. Lys-238 contacts ATP. The region spanning 357–414 (KDLQEALVLTSLAQSRTQAKNMIISNSISINTEKIRKNHIFHEKDKLFGKFTLLSRGK) is the S4 RNA-binding domain.

The protein belongs to the class-I aminoacyl-tRNA synthetase family. TyrS type 1 subfamily. As to quaternary structure, homodimer.

The protein localises to the cytoplasm. The enzyme catalyses tRNA(Tyr) + L-tyrosine + ATP = L-tyrosyl-tRNA(Tyr) + AMP + diphosphate + H(+). Functionally, catalyzes the attachment of tyrosine to tRNA(Tyr) in a two-step reaction: tyrosine is first activated by ATP to form Tyr-AMP and then transferred to the acceptor end of tRNA(Tyr). This chain is Tyrosine--tRNA ligase, found in Buchnera aphidicola subsp. Acyrthosiphon pisum (strain APS) (Acyrthosiphon pisum symbiotic bacterium).